The sequence spans 121 residues: Large ribosomal subunit protein bL12 (121 aa).

Belongs to the bacterial ribosomal protein bL12 family. As to quaternary structure, homodimer. Part of the ribosomal stalk of the 50S ribosomal subunit. Forms a multimeric L10(L12)X complex, where L10 forms an elongated spine to which 2 to 4 L12 dimers bind in a sequential fashion. Binds GTP-bound translation factors.

Functionally, forms part of the ribosomal stalk which helps the ribosome interact with GTP-bound translation factors. Is thus essential for accurate translation. In Mesomycoplasma hyopneumoniae (strain 232) (Mycoplasma hyopneumoniae), this protein is Large ribosomal subunit protein bL12.